A 502-amino-acid chain; its full sequence is Glycerol kinase (502 aa).

An ADP-binding site is contributed by Thr14. Positions 14, 15, and 16 each coordinate ATP. Position 14 (Thr14) interacts with sn-glycerol 3-phosphate. Residue Arg18 participates in ADP binding. Residues Arg84, Glu85, Tyr136, and Asp246 each coordinate sn-glycerol 3-phosphate. Glycerol-binding residues include Arg84, Glu85, Tyr136, Asp246, and Gln247. Thr268 and Gly311 together coordinate ADP. 4 residues coordinate ATP: Thr268, Gly311, Gln315, and Gly412. ADP-binding residues include Gly412 and Asn416.

Belongs to the FGGY kinase family. In terms of assembly, homotetramer and homodimer (in equilibrium). Heterodimer with EIIA-Glc. Binds 1 zinc ion per glycerol kinase EIIA-Glc dimer. The zinc ion is important for dimerization.

The catalysed reaction is glycerol + ATP = sn-glycerol 3-phosphate + ADP + H(+). Its pathway is polyol metabolism; glycerol degradation via glycerol kinase pathway; sn-glycerol 3-phosphate from glycerol: step 1/1. Activity of this regulatory enzyme is affected by several metabolites. Allosterically and non-competitively inhibited by fructose 1,6-bisphosphate (FBP) and unphosphorylated phosphocarrier protein EIIA-Glc (III-Glc), an integral component of the bacterial phosphotransferase (PTS) system. Functionally, key enzyme in the regulation of glycerol uptake and metabolism. Catalyzes the phosphorylation of glycerol to yield sn-glycerol 3-phosphate. In Shigella boydii serotype 18 (strain CDC 3083-94 / BS512), this protein is Glycerol kinase.